Reading from the N-terminus, the 358-residue chain is MAKVAILGAGNLALTLAGDLARRLGQTPSIWAPISNRSSFNDVRCLGSLELVGPDYGGDFQPRLEDDLGTAISGAAFIFLTVPTLGQQGILRELAKFNLSNSVLVALPGSATSLACKQTLVPTFAPIAVIESTTSPYACRRVKARVLMLGVKATFEVATTQPLSEEVKGRFEVLFPNPPQWYQHPASIFFSNTNPVAHPAGILAARDSIEQGILPVPKFYRQFVPQAITRVIAIDEERLSIVDALGLESETDFSYSKKWYGGHACNAREFYETYEGYAEIETPKTMNHRYLTEDVKHILVLWVEIAEAIGVQVPEMKSVVQEASDVLNENLLRTGRGLSSLNLGGANANAIVRALNGV.

Belongs to the lysopine/nopaline/octopine/opine/vitopine dehydrogenases family.

It carries out the reaction D-octopine + NAD(+) + H2O = L-arginine + pyruvate + NADH + H(+). It catalyses the reaction D-lysopine + NADP(+) + H2O = L-lysine + pyruvate + NADPH + H(+). Functionally, reductive condensation of pyruvate and arginine, lysine, histidine, or octopine to form octopine, lysopine, histopine, or octopinic acid, respectively. NADPH is the preferred cofactor, but NADH can also be used. The protein is Protein ocs (ocs) of Agrobacterium vitis (Rhizobium vitis).